The sequence spans 220 residues: Probable transcriptional regulator NRG2 (220 aa).

2 consecutive C2H2-type zinc fingers follow at residues 153–175 (HFCKICSTGFTTSGHLSRHNRIH) and 181–205 (HICPHEGCGQRFSRHDNCNQHYRTH).

The protein resides in the nucleus. Transcriptional repressor. The chain is Probable transcriptional regulator NRG2 (NRG2) from Saccharomyces cerevisiae (strain ATCC 204508 / S288c) (Baker's yeast).